Here is a 695-residue protein sequence, read N- to C-terminus: Solute carrier family 53 member 1 (695 aa).

At Met1–Pro228 the chain is on the cytoplasmic side. One can recognise an SPX domain in the interval Lys2–Gly224. The important for inositol polyphosphate binding stretch occupies residues Lys158 to Lys165. A helical membrane pass occupies residues Ala229 to Leu259. Topologically, residues Glu260–Thr264 are extracellular. A helical transmembrane segment spans residues Val265–Gly296. Residues Val297–Asn309 are Cytoplasmic-facing. A helical membrane pass occupies residues Asn310–Ala337. Residues Pro338–Pro343 lie on the Extracellular side of the membrane. The helical transmembrane segment at Ile344 to Thr365 threads the bilayer. Residues Phe366–Thr383 constitute an intramembrane region (helical). Residues Ala384–Lys388 lie on the Cytoplasmic side of the membrane. Residues Val389–Lys422 form a discontinuously helical membrane-spanning segment. Positions 398 and 401 each coordinate phosphate. Residues Trp423 to Leu429 are Extracellular-facing. The discontinuously helical transmembrane segment at Leu430–Arg471 threads the bilayer. Residues Phe439–Glu642 enclose the EXS domain. Arg472 is a topological domain (cytoplasmic). Residues Ala473 to Asn503 form a helical membrane-spanning segment. Residues Lys482 and Tyr483 each contribute to the phosphate site. Residues His504 to Asp506 are Extracellular-facing. A helical transmembrane segment spans residues Thr507–Trp534. The Cytoplasmic portion of the chain corresponds to Gly535 to Tyr553. The chain crosses the membrane as a discontinuously helical span at residues Pro554–Lys584. Position 570 (Arg570) interacts with phosphate. Topologically, residues Pro585–His586 are extracellular. Residues Val587 to Val625 form a helical membrane-spanning segment. 2 residues coordinate phosphate: Arg602 and Arg603. At Arg626–Thr695 the chain is on the cytoplasmic side. Ser667 carries the post-translational modification Phosphoserine. The disordered stretch occupies residues Pro671–Thr695. Thr689 is subject to Phosphothreonine.

The protein belongs to the SYG1 (TC 2.A.94) family. As to quaternary structure, homodimer. As to expression, expressed in pancreatic islets.

Its subcellular location is the cell membrane. It carries out the reaction phosphate(in) = phosphate(out). In terms of biological role, inorganic ion transporter that mediates phosphate ion export across plasma membrane. Plays a major role in phosphate homeostasis, preventing intracellular phosphate accumulation and possible calcium phosphate precipitation, ultimately preserving calcium signaling. Binds inositol hexakisphosphate (Ins6P) and similar inositol polyphosphates, such as 5-diphospho-inositol pentakisphosphate (5-InsP7), which are important intracellular signaling molecules involved in regulation of phosphate flux. (Microbial infection) Receptor for xenotropic and polytropic murine leukemia (X- and P-MLV) retroviruses. Confers susceptibility to X- or P-MLV infection in vitro. The sequence is that of Solute carrier family 53 member 1 from Mus musculus (Mouse).